The sequence spans 512 residues: Maturase K (512 aa).

Belongs to the intron maturase 2 family. MatK subfamily.

It localises to the plastid. The protein localises to the chloroplast. Its function is as follows. Usually encoded in the trnK tRNA gene intron. Probably assists in splicing its own and other chloroplast group II introns. This Piper cenocladum (Ant piper) protein is Maturase K.